Here is a 374-residue protein sequence, read N- to C-terminus: UPF0754 membrane protein NWMN_1738 (374 aa).

Transmembrane regions (helical) follow at residues 4-24 (LFII…TNVI) and 354-374 (SLGF…AIFV).

This sequence belongs to the UPF0754 family.

It localises to the cell membrane. The protein is UPF0754 membrane protein NWMN_1738 of Staphylococcus aureus (strain Newman).